The primary structure comprises 294 residues: N-acetylmuramic acid 6-phosphate etherase (294 aa).

Residues 54 to 217 (VIASFRKGGR…STTSMIGVGK (164 aa)) enclose the SIS domain. Glu82 acts as the Proton donor in catalysis. Glu113 is an active-site residue.

The protein belongs to the GCKR-like family. MurNAc-6-P etherase subfamily. Homodimer.

It catalyses the reaction N-acetyl-D-muramate 6-phosphate + H2O = N-acetyl-D-glucosamine 6-phosphate + (R)-lactate. It participates in amino-sugar metabolism; N-acetylmuramate degradation. In terms of biological role, specifically catalyzes the cleavage of the D-lactyl ether substituent of MurNAc 6-phosphate, producing GlcNAc 6-phosphate and D-lactate. The protein is N-acetylmuramic acid 6-phosphate etherase of Exiguobacterium sp. (strain ATCC BAA-1283 / AT1b).